The primary structure comprises 155 residues: Endoribonuclease YbeY (155 aa).

Zn(2+) contacts are provided by His110, His114, and His120.

Belongs to the endoribonuclease YbeY family. Zn(2+) is required as a cofactor.

It localises to the cytoplasm. Functionally, single strand-specific metallo-endoribonuclease involved in late-stage 70S ribosome quality control and in maturation of the 3' terminus of the 16S rRNA. This chain is Endoribonuclease YbeY, found in Deinococcus radiodurans (strain ATCC 13939 / DSM 20539 / JCM 16871 / CCUG 27074 / LMG 4051 / NBRC 15346 / NCIMB 9279 / VKM B-1422 / R1).